The primary structure comprises 106 residues: Minor capsid protein VP2 (106 aa).

This sequence belongs to the vesivirus VP2 protein family. In terms of assembly, homooligomer. The portal-like structure consists in 12 copies of VP2. Interacts with capsid protein VP1.

It localises to the virion. The protein localises to the host cytoplasm. Functionally, minor structural protein that forms a portal-like structure at a unique three-fold axis of symmetry, following binding to the host receptor. The virion attaches to feline junctional adhesion molecule A (F11R). Once attached, the virion is endocytosed. Acidification of the endosome induces conformational change of capsid protein thereby injecting virus genomic RNA into host cytoplasm. The channel formed by VP2 may allow the delivery of the viral genome through the host endosomal membrane. This chain is Minor capsid protein VP2, found in Feline calicivirus (strain CFI/68 FIV) (FCV).